Consider the following 282-residue polypeptide: Homeobox protein vex1 (282 aa).

A DNA-binding region (homeobox) is located at residues 129 to 188 (ASRARTKFTAEQLEELEKSFKENRYIGSSEKRRLSKVLKLSENQIKTWFQNRRMKFKRQT).

The protein resides in the nucleus. In terms of biological role, transcriptional repressor. Acts in a ventral signaling pathway downstream of bmp4 to antagonize the Spemann organizer and ventrally pattern the embryonic mesoderm. Represses transcription of the dorsal genes gsc and otx2. The protein is Homeobox protein vex1 of Xenopus tropicalis (Western clawed frog).